Consider the following 104-residue polypeptide: Zinc finger C2H2 protein ECU02_0310 (104 aa).

The C2H2-type zinc finger occupies 56–80 (FYCCECDRHFITEKVLMEHKRSNPH).

It belongs to the ZNF593/BUD20 C2H2-type zinc-finger protein family. Associates with pre-60S ribosomal particles; released from the pre-60S particle very early in the cytoplasm.

The protein resides in the nucleus. It is found in the cytoplasm. In terms of biological role, involved in pre-60S ribosomal particles maturation by promoting the nuclear export of the 60S ribosome. The protein is Zinc finger C2H2 protein ECU02_0310 of Encephalitozoon cuniculi (strain GB-M1) (Microsporidian parasite).